The following is a 295-amino-acid chain: Inward rectifier potassium channel Kirbac3.1 (295 aa).

The Cytoplasmic portion of the chain corresponds to 1-47; it reads MTGGMKPPARKPRILNSDGSSNITRLGLEKRGWLDDHYHDLLTVSWP. The chain crosses the membrane as a helical span at residues 48 to 69; the sequence is VFITLITGLYLVTNALFALAYL. The Extracellular portion of the chain corresponds to 70–82; that stretch reads ACGDVIENARPGS. The segment at residues 83 to 95 is an intramembrane region (helical; Pore-forming); sequence FTDAFFFSVQTMA. The Selectivity filter signature appears at 96-100; that stretch reads TIGYG. Residues 107–131 traverse the membrane as a helical segment; the sequence is PLANTLVTLEALCGMLGLAVAASLI. The Cytoplasmic portion of the chain corresponds to 132–295; it reads YARFTRPTAG…DLGKFHEIAQ (164 aa).

Belongs to the inward rectifier-type potassium channel (TC 1.A.2.1) family. KCNJ11 subfamily. Homotetramer.

It localises to the membrane. Functionally, inward rectifier potassium channel that mediates potassium uptake into the cell. Inward rectifier potassium channels are characterized by a greater tendency to allow potassium to flow into the cell rather than out of it. The inward rectification may be achieved by the blockage of outward current by cytoplasmic divalent metal ions and polyamines. Complements an E.coli mutant that is defective in K(+) uptake. This Paramagnetospirillum magnetotacticum (Aquaspirillum magnetotacticum) protein is Inward rectifier potassium channel Kirbac3.1.